A 186-amino-acid chain; its full sequence is ATP synthase subunit delta, chloroplastic (186 aa).

Belongs to the ATPase delta chain family. In terms of assembly, F-type ATPases have 2 components, F(1) - the catalytic core - and F(0) - the membrane proton channel. F(1) has five subunits: alpha(3), beta(3), gamma(1), delta(1), epsilon(1). CF(0) has four main subunits: a(1), b(1), b'(1) and c(10-14). The alpha and beta chains form an alternating ring which encloses part of the gamma chain. F(1) is attached to F(0) by a central stalk formed by the gamma and epsilon chains, while a peripheral stalk is formed by the delta, b and b' chains.

It is found in the plastid. It localises to the chloroplast thylakoid membrane. Its function is as follows. F(1)F(0) ATP synthase produces ATP from ADP in the presence of a proton or sodium gradient. F-type ATPases consist of two structural domains, F(1) containing the extramembraneous catalytic core and F(0) containing the membrane proton channel, linked together by a central stalk and a peripheral stalk. During catalysis, ATP synthesis in the catalytic domain of F(1) is coupled via a rotary mechanism of the central stalk subunits to proton translocation. This protein is part of the stalk that links CF(0) to CF(1). It either transmits conformational changes from CF(0) to CF(1) or is implicated in proton conduction. The protein is ATP synthase subunit delta, chloroplastic of Porphyra purpurea (Red seaweed).